A 285-amino-acid polypeptide reads, in one-letter code: Small ribosomal subunit protein uS2 (285 aa).

The segment at 228 to 285 (RAGLSADKDAKPEAGAGEPLAEWEQELLSQAAPAAEAEAAPAAEAEAAPAAEAPATEA) is disordered. Low complexity predominate over residues 258–285 (AAPAAEAEAAPAAEAEAAPAAEAPATEA).

The protein belongs to the universal ribosomal protein uS2 family.

The protein is Small ribosomal subunit protein uS2 of Rhodococcus erythropolis (strain PR4 / NBRC 100887).